Consider the following 263-residue polypeptide: 3-methyl-2-oxobutanoate hydroxymethyltransferase (263 aa).

The Mg(2+) site is built by D45 and D84. Residues 45–46, D84, and K112 contribute to the 3-methyl-2-oxobutanoate site; that span reads DS. E114 is a Mg(2+) binding site. Catalysis depends on E181, which acts as the Proton acceptor.

The protein belongs to the PanB family. In terms of assembly, homodecamer; pentamer of dimers. It depends on Mg(2+) as a cofactor.

It is found in the cytoplasm. The catalysed reaction is 3-methyl-2-oxobutanoate + (6R)-5,10-methylene-5,6,7,8-tetrahydrofolate + H2O = 2-dehydropantoate + (6S)-5,6,7,8-tetrahydrofolate. Its pathway is cofactor biosynthesis; (R)-pantothenate biosynthesis; (R)-pantoate from 3-methyl-2-oxobutanoate: step 1/2. Functionally, catalyzes the reversible reaction in which hydroxymethyl group from 5,10-methylenetetrahydrofolate is transferred onto alpha-ketoisovalerate to form ketopantoate. This is 3-methyl-2-oxobutanoate hydroxymethyltransferase from Photorhabdus laumondii subsp. laumondii (strain DSM 15139 / CIP 105565 / TT01) (Photorhabdus luminescens subsp. laumondii).